A 210-amino-acid chain; its full sequence is Large ribosomal subunit protein uL3 (210 aa).

The segment at 139-165 (AEKVHRSPGSIGHATFPGKVFKGKKMP) is disordered.

The protein belongs to the universal ribosomal protein uL3 family. In terms of assembly, part of the 50S ribosomal subunit. Forms a cluster with proteins L14 and L19.

Functionally, one of the primary rRNA binding proteins, it binds directly near the 3'-end of the 23S rRNA, where it nucleates assembly of the 50S subunit. This chain is Large ribosomal subunit protein uL3, found in Maridesulfovibrio salexigens (strain ATCC 14822 / DSM 2638 / NCIMB 8403 / VKM B-1763) (Desulfovibrio salexigens).